The sequence spans 137 residues: Nucleoside diphosphate kinase (137 aa).

ATP is bound by residues lysine 9, phenylalanine 57, arginine 85, threonine 91, arginine 102, and asparagine 112. Histidine 115 functions as the Pros-phosphohistidine intermediate in the catalytic mechanism.

This sequence belongs to the NDK family. In terms of assembly, homotetramer. The cofactor is Mg(2+).

Its subcellular location is the cytoplasm. It catalyses the reaction a 2'-deoxyribonucleoside 5'-diphosphate + ATP = a 2'-deoxyribonucleoside 5'-triphosphate + ADP. The enzyme catalyses a ribonucleoside 5'-diphosphate + ATP = a ribonucleoside 5'-triphosphate + ADP. Its function is as follows. Major role in the synthesis of nucleoside triphosphates other than ATP. The ATP gamma phosphate is transferred to the NDP beta phosphate via a ping-pong mechanism, using a phosphorylated active-site intermediate. The protein is Nucleoside diphosphate kinase of Geotalea uraniireducens (strain Rf4) (Geobacter uraniireducens).